A 364-amino-acid polypeptide reads, in one-letter code: Aromatic prenyltransferase (364 aa).

The first 22 residues, 1–22 (MDRNQWTLALMALMRFAHRAFI), serve as a signal peptide directing secretion. Residues N142 and N337 are each glycosylated (N-linked (GlcNAc...) asparagine).

Belongs to the aromatic prenyltransferase family.

Functionally, prenyltransferase that attaches isoprenoid moieties to carbon atoms of aromatic substrates in an enzyme-catalyzed Friedel-Crafts reaction. This chain is Aromatic prenyltransferase, found in Talaromyces marneffei (strain ATCC 18224 / CBS 334.59 / QM 7333) (Penicillium marneffei).